The sequence spans 160 residues: Cytochrome b6-f complex subunit 4 (160 aa).

3 helical membrane passes run 36-56 (LLYI…GLAV), 95-115 (LLGV…PFLE), and 131-151 (TVFL…TLPI).

This sequence belongs to the cytochrome b family. PetD subfamily. As to quaternary structure, the 4 large subunits of the cytochrome b6-f complex are cytochrome b6, subunit IV (17 kDa polypeptide, petD), cytochrome f and the Rieske protein, while the 4 small subunits are petG, petL, petM and petN. The complex functions as a dimer.

The protein localises to the plastid. It is found in the chloroplast thylakoid membrane. Functionally, component of the cytochrome b6-f complex, which mediates electron transfer between photosystem II (PSII) and photosystem I (PSI), cyclic electron flow around PSI, and state transitions. The sequence is that of Cytochrome b6-f complex subunit 4 from Morus indica (Mulberry).